A 228-amino-acid chain; its full sequence is Ribulose-phosphate 3-epimerase (228 aa).

Serine 11 is a binding site for substrate. A divalent metal cation is bound by residues histidine 36, aspartate 38, and histidine 69. Aspartate 38 acts as the Proton acceptor in catalysis. Substrate is bound by residues histidine 69, 145–148, 180–182, and 202–203; these read GFCG, DGG, and AS. Aspartate 180 contacts a divalent metal cation. Aspartate 180 functions as the Proton donor in the catalytic mechanism.

The protein belongs to the ribulose-phosphate 3-epimerase family. A divalent metal cation serves as cofactor.

The enzyme catalyses D-ribulose 5-phosphate = D-xylulose 5-phosphate. It participates in carbohydrate degradation. In terms of biological role, catalyzes the reversible epimerization of D-ribulose 5-phosphate to D-xylulose 5-phosphate. In Chlamydia muridarum (strain MoPn / Nigg), this protein is Ribulose-phosphate 3-epimerase.